Here is a 1345-residue protein sequence, read N- to C-terminus: Protein dispatched homolog 2 (1345 aa).

The interval 1-28 (MAPEASPERSCSLHTCPLEDPTGAPVPP) is disordered. A helical transmembrane segment spans residues 125–145 (VAVIVGCLAFIFLCTLAGLLG). Residues N304 and N420 are each glycosylated (N-linked (GlcNAc...) asparagine). Residues 429 to 598 (LGLKPRLLKY…LLWLPATVVL (170 aa)) enclose the SSD domain. 6 helical membrane passes run 440 to 460 (LAED…GMSL), 465 to 485 (LFIT…AYFL), 497 to 517 (FVNL…TLIF), 544 to 564 (FGYL…GSYL), 572 to 592 (CFAL…LLWL), and 659 to 679 (YIWI…GGVS). An N-linked (GlcNAc...) asparagine glycan is attached at N776. A run of 5 helical transmembrane segments spans residues 919–939 (PAVV…LSTW), 945–965 (LFSV…LVLL), 974–994 (ALFL…YCIS), 1019–1039 (AMTT…TILL), and 1043–1063 (LGII…FFFQ). Disordered stretches follow at residues 1251-1271 (VRVP…GHPI) and 1295-1345 (PNMP…GYSS). Positions 1297 to 1306 (MPNSHHSSLS) are enriched in polar residues. R1310 bears the Omega-N-methylarginine mark.

This sequence belongs to the dispatched family.

It is found in the membrane. In Mus musculus (Mouse), this protein is Protein dispatched homolog 2 (Disp2).